A 778-amino-acid chain; its full sequence is Putative ATP-dependent RNA helicase MJ1505 (778 aa).

Residues 22 to 186 (IAANALKKKT…EICENLGIEH (165 aa)) form the Helicase ATP-binding domain. An ATP-binding site is contributed by 35–42 (LSTGLGKT). The short motif at 137 to 140 (DEAH) is the DEAH box element. One can recognise a Helicase C-terminal domain in the interval 338–516 (KVVDMVKNIL…EIKEETEEIK (179 aa)).

It belongs to the DEAD box helicase family. DEAH subfamily.

It carries out the reaction ATP + H2O = ADP + phosphate + H(+). This chain is Putative ATP-dependent RNA helicase MJ1505, found in Methanocaldococcus jannaschii (strain ATCC 43067 / DSM 2661 / JAL-1 / JCM 10045 / NBRC 100440) (Methanococcus jannaschii).